A 1403-amino-acid polypeptide reads, in one-letter code: Protein FAM135B (1403 aa).

Disordered stretches follow at residues 445–483 (EKNL…EVQE), 514–548 (EDEC…GQTP), 648–669 (REAL…DLSA), and 718–740 (RHAH…LPSG). The segment covering 649–661 (EALDTKPSQPDHA) has biased composition (basic and acidic residues). The segment covering 731–740 (TESNTSLPSG) has biased composition (polar residues). 2 positions are modified to phosphoserine: Ser-775 and Ser-776. Positions 790-819 (TAGFSEDLDPSSKENSPPRHTSLSYGGSRV) are disordered. Residues 802–814 (KENSPPRHTSLSY) show a composition bias toward polar residues.

The protein belongs to the FAM135 family.

The chain is Protein FAM135B (Fam135b) from Mus musculus (Mouse).